A 113-amino-acid polypeptide reads, in one-letter code: uncharacterized protein (113 aa).

2 consecutive transmembrane segments (helical) span residues 25–45 (FGFC…CFII) and 49–69 (FEVE…LSVW).

The protein localises to the host membrane. This is an uncharacterized protein from Spiroplasma citri (SpV1).